The primary structure comprises 459 residues: FBD-associated F-box protein At1g61320 (459 aa).

A disordered region spans residues 1–25 (MAPPTKRTRVEMAESSNKRMKPSET). In terms of domain architecture, F-box spans 21–69 (KPSETVPEDVLELMMSTYLPVQSLLTTRVLSKRFRETEVRSLDLDFSGI). One can recognise an FBD domain in the interval 396 to 428 (VKIIGYKGHWHELDIVEFFVKNAPSLKRLELQM).

The polypeptide is FBD-associated F-box protein At1g61320 (Arabidopsis thaliana (Mouse-ear cress)).